We begin with the raw amino-acid sequence, 545 residues long: Glucans biosynthesis protein G (545 aa).

An N-terminal signal peptide occupies residues 1–34; it reads MVSLLRCQSFKPSSSLICSLALSAAFALSSSAFA. The interval 38–60 is disordered; it reads KPAENKPATPVVSPPKATAQPAN.

This sequence belongs to the OpgD/OpgG family.

The protein resides in the periplasm. The protein operates within glycan metabolism; osmoregulated periplasmic glucan (OPG) biosynthesis. In terms of biological role, involved in the biosynthesis of osmoregulated periplasmic glucans (OPGs). This chain is Glucans biosynthesis protein G, found in Shewanella sp. (strain MR-4).